The sequence spans 317 residues: COP9 signalosome complex subunit 6b (317 aa).

The MPN domain maps to 11 to 164; the sequence is FKLHPLVMLN…VTIYESEFHV (154 aa).

The protein belongs to the peptidase M67A family. CSN6 subfamily. In terms of assembly, component of the CSN complex, probably composed of CSN1, CSN2, CSN3, CSN4, CSN5 (CSN5A or CSN5B), CSN6 (CSN6A or CSN6B), CSN7 and CSN8. Interacts with itself. In the complex, it probably interacts directly with CSN4, CSN5A or CSN5B, and CSN7. Binds to the translation initiation factors TIF3E1.

It is found in the cytoplasm. Its subcellular location is the nucleus. In terms of biological role, component of the COP9 signalosome complex (CSN), a complex involved in various cellular and developmental processes such as photomorphogenesis and auxin and jasmonate responses. The CSN complex is an essential regulator of the ubiquitin (Ubl) conjugation pathway by mediating the deneddylation of the cullin subunits of SCF-type E3 ligase complexes, leading to decrease the Ubl ligase activity of SCF. It is involved in repression of photomorphogenesis in darkness by regulating the activity of COP1-containing Ubl ligase complexes. The complex is also required for degradation of PSIAA6 by regulating the activity of the Ubl ligase SCF-TIR complex. Essential for the structural integrity of the CSN holocomplex. The sequence is that of COP9 signalosome complex subunit 6b from Arabidopsis thaliana (Mouse-ear cress).